The chain runs to 3974 residues: MKEQSQKIAIIGSACRFPGGATSPSKLWQQLVQPQDLLRPVPRDRFALSTYHNHDGTKPGATNVTNKAYLLDEDPMEFDASFFSISPAEAQGMDPQQRQLLEVTYEALESAGYGLSKVSGSSTGVYVGSSGADYRDIQNRDLDTLGRWHATGTASSILANRISHFYGLCGPSLTLDTACSSSLVGLHLAVQAIRNGDCEQALVAGSNLILDPTPYISGSRLKLFSPDAQCRMWDESGKGYGRGEGVAVVLLKPLVNALLDGDHVEAVIRETGVNQDGHTPGITMPSAEAQTNLIRHVYAKAGLDPRVTAPQFFEAHGTGTAAGDPVEARAIYESFFGDGKTVTNQAGAPKLNVGSIKTVIGHLEGAAGIAGLLKATLALQHAHIPPNLLFKKPNPALVPYLDALEVPVTAKQWPAVEEGTPRLASVNSFGFGGTNAHCLIESFPQDDSHPTGKRGLGRQESEETCIGPVVLSAQSGRSLMSAMKVLASYIESNPGARLRDLLHTLGRRRSKLSVRTFFVATSRQELISQLRHSAENVKDATGFGFRPPARLVGGSQGVLGIFTGQGAQWATMGRVLYQRCGQFRASIERCQAALDALPDGPQWSIAEEMLKTKQASRLSEAAVSQPLCTALQIALVDLIELAGLRFDAVVGHSSGEIAACYYMGLITSRDAICIAYYRGVHSSLAEGTNGQKGAMMAVSMTHNESNEFCSRPDFQGRIHIAAHNAPSSVTLSGDADAIFRAQKELAGAGIFARVLKVDTAYHSDQMLPCVAPYLQSLESLNIPIREPRSDCIWVSSVRPDSFDSSSSLNLEEMRSQYWLDNMVQPVLFAPAIAKALRQHGSSFDMAVEIGPHPALAAPAKDTIMEFSGTVPLYTGILERGLDDVHASSTAIALIWQQMTDDNIDVATYAEAFDVTGDPPAKLLKGLPSYEWDHKPYWRESRISRTIRRRENDSHPLLGSRLSADARNEFRWRNILRLVDVPWLSGHVFQDKTMLPLAAQVSMVIDACSLAFPQSSVESIDITDLEISRDILVEAEGPETELLSTLRVVDRNTTADGTTSISAAWSCHVSHDSELGIPESVCICQVQFSFGSGLAASLPRRVSDPSTTTPISSAKIYESFDHDGLQYSGLFNRLSSVSQALGFASASASWTCDELQDHKLHPAVLDVGFQLLMPATFSQKAENACGPYLPRSVACISLRRGFASLKTGEGLSLAIDAFSAVEESSNVLGDVAFYSASGECVIQVESVKLVPVITPDASNDRRIFTKDVWIEDTFDLSPYACDQDLEDDTGHLAGLVDRLCLYYCRQALDNMCGAVTLLSPLRLLHEELQAVIEAVKSGNHISLAAEYAEDSYDSLMEECLPYHDHKALKRVHELGQNLVKIMQGTTSSPRLRGARLDYPWNTELRNAIAILGHRITQKHPNMNILEIGNGDSGMTAHILQSIGTAYLSYTCASPRSMLSQSSPVDVLGNVELKSMNILQEPERQGFDRHKYDLLISSAPIHGDAAFQTALSNMRTLLRPGGYLLLVAKTGTNLLTTLTLGTSVVSGLESIEESNTPAGKSPSELDSLLLACEFSGLEQIVQDSPHVLTNAYSLIASHAASHMFNLVHNPRPSMAQIIDERARILLIGGRSLATARLVRDVRKMLSEVTPHIVFVDSIEKLEALPIEDDFDCLCFNDLDQPLFAGRRNAKTLEYLQKLYGNVRNLLWYTSGRIHKPEASMSIGVGRSLCGDAPWHNSQFIDVSSAAKVTAHSVVEAYCRLALAPTIASSNENLLWSVEPELVIQGDRTLISRVVENRSINDRFNATRRPILREAKYSEIEVCLKQDPQGQVQLAQYIPVQTIAHNAGLCRIRVKYTAALVAADAAKAALCFGHRVGTETPVFAITKQAGSLVVTPEAATLVCENETIDPVHNLSSMALYIQAAICASRAAQEGRTLLFGVREDVIGAVQTSPLWKDKPVIIVVIDSDDRQCADGVIFLHPMSTRRAIRKKLSQQIDMALDCSSFGHDQLWSRVISTLQCRHEKLTAVDFFAESSLSSLQGWLQEAHVAAPQMWHPQPEARAFDILPIQSIGQEGSSSQISSAIVAWQATENFTYRVAGLESEKLFSDSKTYFLAGMTDSLGLSISAWMIRSGAKHLVLAGRDPTIPPQWLEEMSSLGANIKVLTVDICQKVMLTKAVKEIQAHMPPIAGVCNATLVLSDGLLADETFESFDRTLKAKIDGSRNLDQVFSEPSLAFFVLFGSMVSVTGNSGQADYHAANLYMSSLVNHRRSRGLAASIMDTGVVTDVGLVQQGGDAVATMARRQYVEPISEATLHHWVGEAVLASPVSSGEESRIVVGPKRVPRTLDPDLRPAWYSNPRFSHFLIDDASPTSSDSQGSASLLERLQLAASEDHMLAILMEAAQAKLEALLGMEHGAVAAGGAGSLLSFGVDSGVALQASNWLAQEVHVRMPVMKLLTTPNLKQLCLDVMRNMATDLPRCSAKETAIGGTVMSVRAGRSASPGASCSDRSLSTRSDETRSIRTPALASSLQDSFVHTGASTPIDTLTSADSLHSATASGSAKGAPLSPGQAQLWAATIQSGNDTRYNFTLQFDVEGAIDVDRLRSALVSLIAQQEMLRCSFVEVSAGEVQQRVWPGKDLSRCFKHLPPGDLRRAEEEYERLSQHCWQLSEGDTFMLVLTNGPADKHVITLAAHHIIMDGMSIAMFFRLLALAYEGQHLPVLQRAYTAYAEEHVAELAADRLDDKLEFWKTCLSPLVPTMPVFPMAISGVRKALDDGDTGILTVKSSISAPVVDRIKSMGRKLRCTPFHFMTTALIVLCAKMLHLKDICIGVTDAGRLDERDGETVGHFADILPLRTRVEPGTSMADLVPIVLHNIAQAAENAGVPFSSIVRATKTPRSATHSPIFQVGFNFLPGDARTQFGASTMQWRTGNLAQSLNDVSWWVHARDDGSYTMQVDGRSDLYSLDGLDLLMQTYKDLAETLCTEPNTNLERLRTSSDQAIKAADEAGLGQAKDFGWETTLPDRFDAMAEKYFDQRAAVDSAGGVTYEELRHRVHDIAAALQDSGSAPGAAVAVITGPSVNTLASMLAIIRIRCVYVPLDLSLPHARHTAMIKDCGARVLLFEDSTAERASALRMDGMEVVNVFELLTVGRTQREVSNLSDPHEPAILLYTSGSTSVPKGVVLSQAGFLNYVAAKTAFLGLEREMVLQQSSISFDMGLAQMLHSFCNGGTLVIVPQHARGDPVATAQIMLAHHITFTVATPTEYTAWLSTSSHTIDQYDQWRHVCYGGEFVTDRLSAMFRQLQRQKPLLNNSYGPTETSCATTLCVMSEKGSPAMIGYVGKPLANSRIRIVDQDGQPLPLGHAGEICIGGPGLAVRYVNPDDTRNRFIMQQEVSSSSQASTQAPRRLYRTGDRGKLLVDGSLILLGRMEGDTQVKMHGLRIDVTEVEHALLNAIPDFLAEAIVTMRGAADNAFLVAHVVMSAGITASKGELQLLTRLLRLPRYMLPKSIIAVDGLPTTTSGKIDRRAISQLPLEAPGSKKTSADQLVEAEVLRIWREVLGEEAHLDSESDFFSVGGDSLLVIKLQAGIKALMGLSISLAELYETSTLREMAEKMASVRRTQPKPSLIDWDAEVQVPTPIAKLAAAARPDDHAESAATSGTEVVLTGAADLLGYEILVALLNEPSVRVIHCVAIAEGHGARLPSDARVVVYPGSLRHPTLSLSDEERSNLQDRAHAIIHAGAEGHCLNNYATLRSANLLSTQFLAQIALPRCLPVHFVSGTRVTLLSGTSSLPPLSVASYRPAQHGHDGYTATKWASEVFFEALTRLSPALPVTIHRPCALTGMNAAPDNVMNALVRCSAAIKAVPRNDEAEGYVDFKDARTVAHDMVEQVLAGLGHDPQRACSAGVRFIHHSSGHKVPARDLGRRMEMLYGGTFRKLEMGEWIALAKASAGLHYLAATFLEAMMDKHVTSVYPYMGEEI.

Positions 5 to 442 (SQKIAIIGSA…GTNAHCLIES (438 aa)) constitute a Ketosynthase family 3 (KS3) domain. Residues Cys179, His316, and His362 each act as for beta-ketoacyl synthase activity in the active site. The segment at 561–883 (IFTGQGAQWA…TGILERGLDD (323 aa)) is malonyl-CoA:ACP transacylase (MAT) domain. An N-terminal hotdog fold region spans residues 954 to 1079 (HPLLGSRLSA…HDSELGIPES (126 aa)). A dehydratase (DH) domain region spans residues 954 to 1251 (HPLLGSRLSA…QVESVKLVPV (298 aa)). The 304-residue stretch at 954–1257 (HPLLGSRLSA…LVPVITPDAS (304 aa)) folds into the PKS/mFAS DH domain. The Proton acceptor; for dehydratase activity role is filled by His986. The C-terminal hotdog fold stretch occupies residues 1107–1257 (TTPISSAKIY…LVPVITPDAS (151 aa)). Residue Asp1165 is the Proton donor; for dehydratase activity of the active site. The segment at 1398 to 1529 (PWNTELRNAI…GYLLLVAKTG (132 aa)) is methyltransferase (MT) domain. Residues 2108–2282 (TYFLAGMTDS…ASIMDTGVVT (175 aa)) are ketoreductase (KR) domain. The disordered stretch occupies residues 2492–2516 (AGRSASPGASCSDRSLSTRSDETRS). The segment covering 2498–2509 (PGASCSDRSLST) has biased composition (polar residues). Positions 2560 to 2994 (APLSPGQAQL…LERLRTSSDQ (435 aa)) are condensation (C) domain. Residues 3021 to 3423 (DAMAEKYFDQ…DGSLILLGRM (403 aa)) form an adenylation (A) (KR) domain region. The region spanning 3537–3613 (SADQLVEAEV…EMAEKMASVR (77 aa)) is the Carrier domain. Ser3573 is modified (O-(pantetheine 4'-phosphoryl)serine). The reductase (RED) domain stretch occupies residues 3657-3940 (VVLTGAADLL…KLEMGEWIAL (284 aa)).

It in the C-terminal section; belongs to the NRP synthetase family.

The protein operates within secondary metabolite biosynthesis. In terms of biological role, hybrid PKS-NRPS synthetase; part of the hps1-dma1 gene cluster that probably mediates the biosynthesis a derivative of cyclopiazonic acid (CPA). The hybrid polyketide synthase-nonribosomal peptide synthetase (PKS-NRPS) nps1 might incorporates acetyl-CoA, malonyl-CoA, and tryptophan (Trp) and utilizes a C-terminal redox-incompetent reductase domain to make and release the tryptophan tetramic acid, cyclo-acetoacetyl-L-tryptophan (c-AATrp), as the first intermediate in the pathway. In addition, the cluster also includes the tryptophan dimethylallyltransferase dma1, the FAD-dependent oxidoreductase toxD, the cytochrome P450 monooxygenase cyp3.1 and the methyltransferase DOTSEDRAFT_139328; the latter 2 being not present in all CPA-producing fungi but involved in additional modifications that occur in biosynthesis the of a range of CPA and CPA-like products. Further studies are required to clarify whether the CPA-like hps1-dma1 cluster is functional or a non-functional relic reflecting evolution of D.septosporum. The protein is Hybrid PKS-NRPS synthetase 1 of Dothistroma septosporum (strain NZE10 / CBS 128990) (Red band needle blight fungus).